Consider the following 280-residue polypeptide: Shikimate dehydrogenase (NADP(+)) (280 aa).

Residues 19 to 21 and Thr66 each bind shikimate; that span reads SFS. Lys70 (proton acceptor) is an active-site residue. Glu82 is a binding site for NADP(+). Shikimate is bound by residues Asn91 and Asp106. Residues 130–134 and Leu222 each bind NADP(+); that span reads GSGGA. Tyr224 lines the shikimate pocket. Gly245 contributes to the NADP(+) binding site.

This sequence belongs to the shikimate dehydrogenase family. In terms of assembly, homodimer.

It catalyses the reaction shikimate + NADP(+) = 3-dehydroshikimate + NADPH + H(+). Its pathway is metabolic intermediate biosynthesis; chorismate biosynthesis; chorismate from D-erythrose 4-phosphate and phosphoenolpyruvate: step 4/7. Involved in the biosynthesis of the chorismate, which leads to the biosynthesis of aromatic amino acids. Catalyzes the reversible NADPH linked reduction of 3-dehydroshikimate (DHSA) to yield shikimate (SA). This chain is Shikimate dehydrogenase (NADP(+)), found in Methanococcus maripaludis (strain C7 / ATCC BAA-1331).